The sequence spans 573 residues: FAD-dependent monooxygenase resA (573 aa).

The first 17 residues, 1 to 17, serve as a signal peptide directing secretion; that stretch reads MYDVIVIGAGWCGLVAA. Isoleucine 106 contributes to the FAD binding site. Asparagine 235 is a glycosylation site (N-linked (GlcNAc...) asparagine).

It belongs to the FAD-binding monooxygenase family. FAD serves as cofactor.

The protein operates within antifungal biosynthesis. Functionally, FAD-dependent monooxygenase; part of the gene cluster that mediates the biosynthesis of the tetrahydropyranyl antifungal agent restricticin that acts as an inhibitor of CYP51 and blocks the ergosterol biosynthesis. The highly reducing polyketide synthase resH, the short chain dehydrogenase resG, the cyclase resF, the FAD-dependent monooxygenase resA and the enoylreductase resD are required to generate the first stable intermediate desmethylrestrictinol. ResH with resD biosynthesize the first polyketide chain intermediate that is reduced by resG, followed by epoxidation by resA before 6-endo cyclization via epoxide opening by resF leads to desmethylrestrictinol. The methyltransferase resE then catalyzes the C4 O-methylation of desmethylrestrictinol to produce restrictinol, and the nonribosomal peptide synthetase resC catalyzes the C3 esterification of restrictinol with glycine that leads to restricticin. The sequence is that of FAD-dependent monooxygenase resA from Aspergillus sclerotiorum.